A 525-amino-acid chain; its full sequence is MESAQIHSTRDSLFILWLTTLLVSVLATAAYIKFQSRPRPYSGFPLVTLGGPSETDSSHAANWFRRGRALVNKGLSELSGAFQISNGSGYWIILPSKYMDELRNHPDMSLRDALREENFPNYRGFDGFRQAFKDSTFTQEVIRVKVTQSLGLITANLANECQHALQENLGESREWQQRFIIEDILNIVAQLTSRVFLGERLCRDKEWLQITKEYARNSFMGSEELRQCLPLTRPLMQFFMPACTQLRKFSAAARRLIDPEVQARKRRAEEAIKLGKKPPKVEDTIGWMVEVARGRQVDYVGGQLALSIAAIHSSTDNLSKAVVKLCEMPEIVAPLREEITTVLESTDGWSKPALYRMKLLDSFLKEVQRLAPFTIVGMHRRVMKGYVLSDGTHLPKNSRIMVMNDKLRDSSVYEDPDTFKYDRFARLREQPGQEDQHQLASTSSEFATFGHGEHACPGRFFAANQLKIIMACLLLKYDFCFQPGQAEKARVIPFEMVETIDPTLKIEVRRRSEELDVTKVAKETA.

A helical membrane pass occupies residues 12–32 (SLFILWLTTLLVSVLATAAYI). N-linked (GlcNAc...) asparagine glycans are attached at residues N86 and N317. C456 is a binding site for heme.

It belongs to the cytochrome P450 family. Requires heme as cofactor.

It localises to the membrane. The protein operates within mycotoxin biosynthesis. Functionally, cytochrome P450 monooxygenase; part of the gene cluster that mediates the biosynthesis of the diterpene glucoside brassicicene C. In the first step of the brassicicene C biosynthesis, the bifunctional diterpene synthase bsc8 that possesses both prenyl transferase and terpene cyclase activity, converts isopentenyl diphosphate and dimethylallyl diphosphate into geranylgeranyl diphosphate (GGDP) that is further converted into fusicocca-2,10(14)-diene, the first precursor for brassicicene C. Fusicocca-2,10(14)-diene is then substrate of cytochrome P450 monooxygenase bsc1 for hydroxylation at the C-8 position. Oxidation at C-16 position to aldehyde is then catalyzed by the cytochrome P450 monooyxygenase bsc7, yielding fusicocca-2,10(14)-diene-8-beta,16-diol. Follows the isomerization of the double bond and reduction of aldehyde to alcohol catalyzed by the short-chain dehydrogenase/reductase bsc3 to yield the diol compound fusicocca-1,10(14)-diene-8 beta,16-diol. The next step is the oxidation at the C-3 position of fusicocca-2,10(14)-diene-8-beta,16-diol catalyzed by the alpha-ketoglutarate dependent dioxygenase bsc9, to produce a triol compound. Methylation of the hydroxy group at position 16 is performed by the methyltransferase bsc6. 16-O-methylation is followed by oxidation at the C-13 position to ketone and an alkyl shift of the methyl group leads to brassicicene C. Although the probable acetyltransferase bsc4 is included in the gene cluster, no acetylation reactions are necessary for brassicicene C biosynthesis. However, the fact that brassicicene E, which is a structurally related compound having an acetoxy group at position 12, was previously isolated from another strain of A.brassicicola suggests that the ATCC 96836 strain might also produce a small amount of brassicicene E. The protein is Cytochrome P450 monooxygenase bsc2 of Alternaria brassicicola (Dark leaf spot agent).